Here is a 955-residue protein sequence, read N- to C-terminus: Leucine--tRNA ligase (955 aa).

The short motif at 51 to 61 is the 'HIGH' region element; that stretch reads PYLNGVLHAGH. The 'KMSKS' region motif lies at 647-651; that stretch reads KLSKS. Lysine 650 provides a ligand contact to ATP.

This sequence belongs to the class-I aminoacyl-tRNA synthetase family.

Its subcellular location is the cytoplasm. It catalyses the reaction tRNA(Leu) + L-leucine + ATP = L-leucyl-tRNA(Leu) + AMP + diphosphate. This is Leucine--tRNA ligase from Methanococcus maripaludis (strain C5 / ATCC BAA-1333).